The chain runs to 238 residues: uncharacterized protein (238 aa).

This is an uncharacterized protein from Acidianus filamentous virus 2 (isolate Italy/Pozzuoli) (AFV-2).